The sequence spans 356 residues: Putative methylthioribose-1-phosphate isomerase (356 aa).

Substrate is bound by residues 57 to 59, Arg100, and Gln206; that span reads RGA. The active-site Proton donor is the Asp247. 257 to 258 is a substrate binding site; the sequence is NK.

It belongs to the eIF-2B alpha/beta/delta subunits family. MtnA subfamily.

It catalyses the reaction 5-(methylsulfanyl)-alpha-D-ribose 1-phosphate = 5-(methylsulfanyl)-D-ribulose 1-phosphate. Functionally, catalyzes the interconversion of methylthioribose-1-phosphate (MTR-1-P) into methylthioribulose-1-phosphate (MTRu-1-P). This chain is Putative methylthioribose-1-phosphate isomerase (aIF-2BI), found in Pyrococcus abyssi (strain GE5 / Orsay).